The following is a 275-amino-acid chain: Chlorophyll a-b binding protein 3, chloroplastic (275 aa).

Residue Trp-58 participates in chlorophyll b binding. 3 residues coordinate chlorophyll a: Phe-78, Ser-84, and Glu-102. Positions 107, 142, 169, and 172 each coordinate chlorophyll b. Positions 226, 227, 230, 232, 244, and 259 each coordinate chlorophyll a. The chain crosses the membrane as a helical span at residues 233 to 253; sequence LAMLAILGYFIQGLVTGVGPY.

This sequence belongs to the light-harvesting chlorophyll a/b-binding (LHC) protein family. As to quaternary structure, the LHC complex consists of chlorophyll a-b binding proteins. It depends on Binds at least 14 chlorophylls (8 Chl-a and 6 Chl-b) and carotenoids such as lutein and neoxanthin. as a cofactor. Photoregulated by reversible phosphorylation of its threonine residues.

Its subcellular location is the plastid. The protein localises to the chloroplast thylakoid membrane. Functionally, the light-harvesting complex (LHC) functions as a light receptor, it captures and delivers excitation energy to photosystems with which it is closely associated. Its function is as follows. May channel protons produced in the catalytic Mn center of water oxidation into the thylakoid lumen. The sequence is that of Chlorophyll a-b binding protein 3, chloroplastic from Pisum sativum (Garden pea).